The primary structure comprises 490 residues: Argininosuccinate lyase (490 aa).

It belongs to the lyase 1 family. Argininosuccinate lyase subfamily.

Its subcellular location is the cytoplasm. It carries out the reaction 2-(N(omega)-L-arginino)succinate = fumarate + L-arginine. It participates in amino-acid biosynthesis; L-arginine biosynthesis; L-arginine from L-ornithine and carbamoyl phosphate: step 3/3. The protein is Argininosuccinate lyase of Bifidobacterium longum subsp. infantis (strain ATCC 15697 / DSM 20088 / JCM 1222 / NCTC 11817 / S12).